Consider the following 412-residue polypeptide: Arginine biosynthesis bifunctional protein ArgJ (412 aa).

6 residues coordinate substrate: threonine 162, lysine 188, threonine 199, glutamate 285, asparagine 407, and threonine 412. The active-site Nucleophile is the threonine 199.

The protein belongs to the ArgJ family. In terms of assembly, heterotetramer of two alpha and two beta chains.

It is found in the cytoplasm. The catalysed reaction is N(2)-acetyl-L-ornithine + L-glutamate = N-acetyl-L-glutamate + L-ornithine. The enzyme catalyses L-glutamate + acetyl-CoA = N-acetyl-L-glutamate + CoA + H(+). The protein operates within amino-acid biosynthesis; L-arginine biosynthesis; L-ornithine and N-acetyl-L-glutamate from L-glutamate and N(2)-acetyl-L-ornithine (cyclic): step 1/1. It functions in the pathway amino-acid biosynthesis; L-arginine biosynthesis; N(2)-acetyl-L-ornithine from L-glutamate: step 1/4. In terms of biological role, catalyzes two activities which are involved in the cyclic version of arginine biosynthesis: the synthesis of N-acetylglutamate from glutamate and acetyl-CoA as the acetyl donor, and of ornithine by transacetylation between N(2)-acetylornithine and glutamate. In Staphylococcus saprophyticus subsp. saprophyticus (strain ATCC 15305 / DSM 20229 / NCIMB 8711 / NCTC 7292 / S-41), this protein is Arginine biosynthesis bifunctional protein ArgJ.